A 461-amino-acid polypeptide reads, in one-letter code: DNA polymerase delta subunit 3 (461 aa).

Disordered stretches follow at residues 148–229 (VAQA…SAKG), 249–380 (VPGQ…KRVL), and 399–461 (YESE…CQKK). The segment covering 155 to 172 (ARSSSQTPSDTSAVSTPP) has biased composition (polar residues). Basic and acidic residues predominate over residues 205 to 214 (DANKEPKAKE). Residues 215 to 228 (APSVSAASSKPSAK) are compositionally biased toward low complexity. A compositionally biased stretch (basic and acidic residues) spans 279–304 (KPGRKTEPAKIQQKDKKSKMKRMDKS). Residues 371–380 (GKKRKRKRVL) show a composition bias toward basic residues. Residues 427 to 436 (VKKEPKEERK) show a composition bias toward basic and acidic residues. The short motif at 451–458 (QISIMGFC) is the PIP-box element.

In terms of assembly, component of both the DNA polymerase delta and DNA polymerase zeta complexes. The tetrameric DNA polymerase delta complex (Pol-delta4), which consists of POLD1/p125, POLD2/p50, POLD3/p66/p68 and POLD4/p12, with POLD1 bearing DNA polymerase and 3' to 5' proofreading exonuclease activities.

The protein localises to the cytoplasm. It is found in the nucleus. Its function is as follows. Accessory component of both the DNA polymerase delta complex and the DNA polymerase zeta complex. As a component of the trimeric and tetrameric DNA polymerase delta complexes (Pol-delta3 and Pol-delta4, respectively), plays a role in high fidelity genome replication, including in lagging strand synthesis, and repair. Required for optimal Pol-delta activity. Stabilizes the Pol-delta complex and plays a major role in Pol-delta stimulation by PCNA. Pol-delta3 and Pol-delta4 are characterized by the absence or the presence of POLD4. They exhibit differences in catalytic activity. Most notably, Pol-delta3 shows higher proofreading activity than Pol-delta4. Although both Pol-delta3 and Pol-delta4 process Okazaki fragments in vitro, Pol-delta3 may also be better suited to fulfill this task, exhibiting near-absence of strand displacement activity compared to Pol-delta4 and stalling on encounter with the 5'-blocking oligonucleotides. Pol-delta3 idling process may avoid the formation of a gap, while maintaining a nick that can be readily ligated. Along with DNA polymerase kappa, DNA polymerase delta carries out approximately half of nucleotide excision repair (NER) synthesis following UV irradiation. In this context, POLD3, along with PCNA and RFC1-replication factor C complex, is required to recruit POLD1, the catalytic subunit of the polymerase delta complex, to DNA damage sites. Under conditions of DNA replication stress, required for the repair of broken replication forks through break-induced replication (BIR). Involved in the translesion synthesis (TLS) of templates carrying O6-methylguanine or abasic sites performed by Pol-delta4, independently of DNA polymerase zeta (REV3L) or eta (POLH). Facilitates abasic site bypass by DNA polymerase delta by promoting extension from the nucleotide inserted opposite the lesion. Also involved in TLS, as a component of the tetrameric DNA polymerase zeta complex. Along with POLD2, dramatically increases the efficiency and processivity of DNA synthesis of the DNA polymerase zeta complex compared to the minimal zeta complex, consisting of only REV3L and REV7. The polypeptide is DNA polymerase delta subunit 3 (POLD3) (Gallus gallus (Chicken)).